Reading from the N-terminus, the 480-residue chain is MLTKVLSKEVKPCLACPICTNPFKDATTISECLHTFCRSCIRNKFINERVNACPVCNVNLGVFPLEKLRSDCTWQDLKLKIYRAMMESLKKAGPKTVAASVKSSKKKRKSRTSLRVSSSRVSSSPDTPLEPANVVVEPPNVVVEEKHRETVLALQSTRKPIITFQKRGRKASLPKKIDSKPEPELPPKEPKIKNLFDLNNEPEDNGLDEAEGSTFQEVVPKEKDLCKPIFSLSVTLNINDTPPDIVEPEISSDDDTEESVEPIQNKCVVNRETKEVPVQVNQNSLLISSDRDREDNSGQKLKTNGAATSRSRKKKGKKPVEKSYSLRPRIGRRTVNPAAGTTTPEAPVSVEEEMKVEEGRNNNPVWFSLKPSKTQNIEMLLPPITACCIRVKDSNMTVSYLKKYLMVKLGLESEDQVEIWLRDEPVCSSLTLHNLVDWWVQTTPLPERQSAMVGSSAAEFIMDLYYSFKSDASDSGSASE.

An RING-type zinc finger spans residues 16-57 (CPICTNPFKDATTISECLHTFCRSCIRNKFINERVNACPVCN). Disordered regions lie at residues 93–133 (GPKT…EPAN), 167–193 (RGRK…PKIK), 241–261 (TPPD…ESVE), and 280–356 (VNQN…EMKV). Residues 103–112 (SSKKKRKSRT) show a composition bias toward basic residues. A compositionally biased stretch (low complexity) spans 113 to 133 (SLRVSSSRVSSSPDTPLEPAN). The segment covering 175 to 193 (KKIDSKPEPELPPKEPKIK) has biased composition (basic and acidic residues). A compositionally biased stretch (acidic residues) spans 246–260 (VEPEISSDDDTEESV). Polar residues predominate over residues 298 to 309 (GQKLKTNGAATS).

It carries out the reaction S-ubiquitinyl-[E2 ubiquitin-conjugating enzyme]-L-cysteine + [acceptor protein]-L-lysine = [E2 ubiquitin-conjugating enzyme]-L-cysteine + N(6)-ubiquitinyl-[acceptor protein]-L-lysine.. Its pathway is protein modification; protein ubiquitination. The chain is Probable E3 ubiquitin protein ligase DRIPH from Arabidopsis thaliana (Mouse-ear cress).